The following is a 311-amino-acid chain: 4-hydroxy-tetrahydrodipicolinate synthase (311 aa).

Residue Thr51 participates in pyruvate binding. Residue Tyr140 is the Proton donor/acceptor of the active site. Catalysis depends on Lys168, which acts as the Schiff-base intermediate with substrate. Ile209 serves as a coordination point for pyruvate.

Belongs to the DapA family. As to quaternary structure, homotetramer; dimer of dimers.

It is found in the cytoplasm. It catalyses the reaction L-aspartate 4-semialdehyde + pyruvate = (2S,4S)-4-hydroxy-2,3,4,5-tetrahydrodipicolinate + H2O + H(+). It participates in amino-acid biosynthesis; L-lysine biosynthesis via DAP pathway; (S)-tetrahydrodipicolinate from L-aspartate: step 3/4. Catalyzes the condensation of (S)-aspartate-beta-semialdehyde [(S)-ASA] and pyruvate to 4-hydroxy-tetrahydrodipicolinate (HTPA). This chain is 4-hydroxy-tetrahydrodipicolinate synthase, found in Streptococcus pneumoniae (strain Taiwan19F-14).